Here is a 1000-residue protein sequence, read N- to C-terminus: Lysine-specific histone demethylase 1 (1000 aa).

The tract at residues 104 to 123 is disordered; sequence RRPAGRRGRPALNTSNSLER. Positions 107–137 form a coiled coil; that stretch reads AGRRGRPALNTSNSLERNGTRYVSAEAPISV. An SWIRM domain is found at 153–249; that stretch reads CYESAIASNL…YGCIYIISSL (97 aa). FAD contacts are provided by residues 260 to 302, E301, and 328 to 329; these read VAII…IYEA and LA. The demethylase activity stretch occupies residues 279–950; it reads LFAQYEQDFL…RCESQPIPED (672 aa). A coiled-coil region spans residues 434–529; it reads IGWYISIEAF…ADMLNSLAST (96 aa). Positions 780–800 are disordered; the sequence is TYGTKRNAQQALGKEGERENK. Positions 841-921 form a DNA-binding region, HMG box; that stretch reads SRPSANPYLL…NYSTRLEEYQ (81 aa). Position 908–909 (908–909) interacts with FAD; the sequence is AR. Basic and acidic residues predominate over residues 959–972; it reads EQEDEHLHPEKEGM. The segment at 959 to 1000 is disordered; it reads EQEDEHLHPEKEGMSVENSDDDYHDDLDYEDSISEVFPDNFS. A compositionally biased stretch (acidic residues) spans 976-991; sequence NSDDDYHDDLDYEDSI.

The protein belongs to the flavin monoamine oxidase family. As to quaternary structure, component of the SWM histone demethylase complex composed of at least lsd1, lsd2, phf1 and phf2. Interacts directly with lsd2. The cofactor is FAD.

The protein resides in the nucleus. Catalytic component of the SWM histone demethylase complex that specifically demethylates H3K9me2, a specific tag for epigenetic transcriptional activation, thereby acting as a corepressor. Acts by oxidizing the substrate by FAD to generate the corresponding imine that is subsequently hydrolyzed. Has a role in regulating heterochromatin propagation and euchromatic transcription. Also has a gene activating role. The polypeptide is Lysine-specific histone demethylase 1 (lsd1) (Schizosaccharomyces pombe (strain 972 / ATCC 24843) (Fission yeast)).